Here is a 270-residue protein sequence, read N- to C-terminus: Probable septum site-determining protein MinC (270 aa).

It belongs to the MinC family. As to quaternary structure, interacts with MinD and FtsZ.

Functionally, cell division inhibitor that blocks the formation of polar Z ring septums. Rapidly oscillates between the poles of the cell to destabilize FtsZ filaments that have formed before they mature into polar Z rings. Prevents FtsZ polymerization. This is Probable septum site-determining protein MinC from Cupriavidus necator (strain ATCC 17699 / DSM 428 / KCTC 22496 / NCIMB 10442 / H16 / Stanier 337) (Ralstonia eutropha).